We begin with the raw amino-acid sequence, 881 residues long: Probable intermembrane transport protein HI_1672 (881 aa).

A helical membrane pass occupies residues 30 to 49; it reads FWLLPFIALCIGAILFFQIV.

It belongs to the PqiB family.

The protein localises to the cell inner membrane. The protein is Probable intermembrane transport protein HI_1672 of Haemophilus influenzae (strain ATCC 51907 / DSM 11121 / KW20 / Rd).